Reading from the N-terminus, the 160-residue chain is Small ribosomal subunit protein uS9 (160 aa).

This sequence belongs to the universal ribosomal protein uS9 family.

This is Small ribosomal subunit protein uS9 from Bradyrhizobium sp. (strain ORS 278).